A 308-amino-acid polypeptide reads, in one-letter code: Pantothenate kinase (308 aa).

Glycine 91–serine 98 provides a ligand contact to ATP.

Belongs to the prokaryotic pantothenate kinase family.

It localises to the cytoplasm. The enzyme catalyses (R)-pantothenate + ATP = (R)-4'-phosphopantothenate + ADP + H(+). Its pathway is cofactor biosynthesis; coenzyme A biosynthesis; CoA from (R)-pantothenate: step 1/5. This Lacticaseibacillus paracasei (strain ATCC 334 / BCRC 17002 / CCUG 31169 / CIP 107868 / KCTC 3260 / NRRL B-441) (Lactobacillus paracasei) protein is Pantothenate kinase.